Here is a 605-residue protein sequence, read N- to C-terminus: Sulfite reductase [NADPH] flavoprotein alpha-component (605 aa).

One can recognise a Flavodoxin-like domain in the interval 70–208 (LTIIYASQTG…PAAEWRVKAL (139 aa)). Residues 76–81 (SQTGNA), 123–126 (STHG), and 159–168 (LGDSSYEFFC) contribute to the FMN site. The 215-residue stretch at 240-454 (QNPYEATLLT…VEENNNFKLP (215 aa)) folds into the FAD-binding FR-type domain. Residues threonine 328, glycine 362, 392 to 395 (RLYS), 410 to 412 (TVG), and 425 to 428 (GGAS) each bind FAD. NADP(+)-binding positions include 525–526 (SR), 531–535 (KVYVQ), and aspartate 567. Tyrosine 605 serves as a coordination point for FAD.

Belongs to the NADPH-dependent sulphite reductase flavoprotein subunit CysJ family. The protein in the N-terminal section; belongs to the flavodoxin family. This sequence in the C-terminal section; belongs to the flavoprotein pyridine nucleotide cytochrome reductase family. As to quaternary structure, alpha(8)-beta(8). The alpha component is a flavoprotein, the beta component is a hemoprotein. The cofactor is FAD. Requires FMN as cofactor.

The enzyme catalyses hydrogen sulfide + 3 NADP(+) + 3 H2O = sulfite + 3 NADPH + 4 H(+). It participates in sulfur metabolism; hydrogen sulfide biosynthesis; hydrogen sulfide from sulfite (NADPH route): step 1/1. Component of the sulfite reductase complex that catalyzes the 6-electron reduction of sulfite to sulfide. This is one of several activities required for the biosynthesis of L-cysteine from sulfate. The flavoprotein component catalyzes the electron flow from NADPH -&gt; FAD -&gt; FMN to the hemoprotein component. This is Sulfite reductase [NADPH] flavoprotein alpha-component from Photobacterium profundum (strain SS9).